A 180-amino-acid chain; its full sequence is ATP-dependent protease subunit HslV (180 aa).

Thr5 is an active-site residue. Positions 161, 164, and 167 each coordinate Na(+).

Belongs to the peptidase T1B family. HslV subfamily. As to quaternary structure, a double ring-shaped homohexamer of HslV is capped on each side by a ring-shaped HslU homohexamer. The assembly of the HslU/HslV complex is dependent on binding of ATP.

It is found in the cytoplasm. The catalysed reaction is ATP-dependent cleavage of peptide bonds with broad specificity.. Its activity is regulated as follows. Allosterically activated by HslU binding. In terms of biological role, protease subunit of a proteasome-like degradation complex believed to be a general protein degrading machinery. The polypeptide is ATP-dependent protease subunit HslV (Campylobacter fetus subsp. fetus (strain 82-40)).